Consider the following 352-residue polypeptide: Homeobox protein Mohawk (352 aa).

The segment at 19–53 (GASERERGGRPYSGVLDSPHARPEVGIADGPPLKD) is disordered. Residues 71-132 (VRHKRQALQD…NARRRLKNTV (62 aa)) constitute a DNA-binding region (homeobox; TALE-type). Disordered stretches follow at residues 157–194 (LSVS…IKSE) and 245–272 (TRQR…SETE).

The protein belongs to the TALE/IRO homeobox family.

The protein localises to the nucleus. In terms of biological role, may act as a morphogenetic regulator of cell adhesion. The sequence is that of Homeobox protein Mohawk (MKX) from Pongo abelii (Sumatran orangutan).